Reading from the N-terminus, the 767-residue chain is Cilia- and flagella-associated protein 91 (767 aa).

Residues 1 to 29 (MSHAVTIEEPQAQPQVSQTRYRERSRAGS) are disordered.

This sequence belongs to the CFAP91 family. In terms of assembly, interacts with MYCBP and AKAP1. Part of a complex containing MYCBP, AKAP1 and PRKAR2B. Interacts with CFAP61. Does not interact with MYCBP. Phosphorylated by PKA. In terms of tissue distribution, strongly expressed in the liver. Widely expressed, but strongly expressed in all spermatogenesis-related tissues, including the testis, the epithelium of cauda and the corpus epididymis, as well as the spermatid and mature sperm. Also expressed in Leydig cells.

Its subcellular location is the mitochondrion. The protein resides in the cytoplasm. It is found in the cytoskeleton. It localises to the cilium axoneme. Involved in sperm flagellum axonemal organization and function. May regulate cilium motility through its role in the assembly of the axonemal radial spokes. This is Cilia- and flagella-associated protein 91 from Homo sapiens (Human).